The chain runs to 176 residues: Large ribosomal subunit protein uL10 (176 aa).

This sequence belongs to the universal ribosomal protein uL10 family. Part of the ribosomal stalk of the 50S ribosomal subunit. The N-terminus interacts with L11 and the large rRNA to form the base of the stalk. The C-terminus forms an elongated spine to which L12 dimers bind in a sequential fashion forming a multimeric L10(L12)X complex.

Functionally, forms part of the ribosomal stalk, playing a central role in the interaction of the ribosome with GTP-bound translation factors. This Coprothermobacter proteolyticus (strain ATCC 35245 / DSM 5265 / OCM 4 / BT) protein is Large ribosomal subunit protein uL10.